We begin with the raw amino-acid sequence, 1538 residues long: Phenolphthiocerol/phthiocerol polyketide synthase subunit B (1538 aa).

Positions 33 to 455 (AEPVAVVGIG…GTNAHVIIEQ (423 aa)) constitute a Ketosynthase family 3 (KS3) domain. Catalysis depends on for beta-ketoacyl synthase activity residues Cys-205, His-340, and His-377. An acyltransferase region spans residues 553-882 (DGSPGPGTVF…TNLYTADIAH (330 aa)). The active-site For malonyltransferase activity is Ser-649. 1153–1196 (SQLVIGATGNIGPHLIRQLARMGAKTIVAMARKPGALDELTQCL) lines the NADP(+) pocket. The segment at 1153-1328 (SQLVIGATGN…TVVDWGLWKS (176 aa)) is beta-ketoacyl reductase. The Carrier domain occupies 1423-1498 (DMLFDHVGAL…SLTDYLATVL (76 aa)). Ser-1458 bears the O-(pantetheine 4'-phosphoryl)serine mark.

It depends on NADP(+) as a cofactor. Requires pantetheine 4'-phosphate as cofactor.

The enzyme catalyses icosanoyl-[(phenol)carboxyphthiodiolenone synthase] + 2 (S)-methylmalonyl-CoA + 3 malonyl-CoA + 5 NADPH + 10 H(+) = C32-carboxyphthiodiolenone-[(phenol)carboxyphthiodiolenone synthase] + 5 CO2 + 5 NADP(+) + 5 CoA + 2 H2O. It carries out the reaction docosanoyl-[(phenol)carboxyphthiodiolenone synthase] + 2 (S)-methylmalonyl-CoA + 3 malonyl-CoA + 5 NADPH + 10 H(+) = C34-carboxyphthiodiolenone-[(phenol)carboxyphthiodiolenone synthase] + 5 CO2 + 5 NADP(+) + 5 CoA + 2 H2O. It catalyses the reaction 17-(4-hydroxyphenyl)heptadecanoyl-[(phenol)carboxyphthiodiolenone synthase] + 2 (S)-methylmalonyl-CoA + 3 malonyl-CoA + 5 NADPH + 10 H(+) = C35-(phenol)carboxyphthiodiolenone-[(phenol)carboxyphthiodiolenone synthase] + 5 CO2 + 5 NADP(+) + 5 CoA + 2 H2O. The catalysed reaction is 19-(4-hydroxyphenyl)nonadecanoyl-[(phenol)carboxyphthiodiolenone synthase] + 2 (S)-methylmalonyl-CoA + 3 malonyl-CoA + 5 NADPH + 10 H(+) = C37-(phenol)carboxyphthiodiolenone-[(phenol)carboxyphthiodiolenone synthase] + 5 CO2 + 5 NADP(+) + 5 CoA + 2 H2O. It functions in the pathway lipid metabolism; fatty acid biosynthesis. Part of the PpsABCDE complex involved in the biosynthesis of the lipid core common to phthiocerols and phenolphthiocerols by successive additions of malonyl-CoA or methylmalonyl-CoA extender units. PpsA can accept as substrate the activated forms of either icosanoyl (C20), docosanoyl (C22) or lignoceroyl (C24) groups from FadD26, or a (4-hydroxyphenyl)-C17 or (4-hydroxyphenyl)-C19 fatty acyl from FadD29. PpsA initiates the biosynthesis and extends its substrate using a malonyl-CoA extender unit. The PpsB and PpsC proteins add the second and third malonyl-CoA extender units. PpsD adds an (R)-methylmalonyl unit and PpsE adds a second (R)-methylmalonyl unit. The incorporation of the methylmalonyl units results in formation of two branched methyl groups in the elongated product. The sequence is that of Phenolphthiocerol/phthiocerol polyketide synthase subunit B (ppsB) from Mycobacterium tuberculosis (strain CDC 1551 / Oshkosh).